The following is a 273-amino-acid chain: MTLQETIIAQLGVKPSINPKEEIRKSVDFLKAYMIKHPFLKTYVLGISGGQDSTLAGRLAQLAVEELRAETEKDYQFIAIRLPYGVQADEDDAQRALAFIKPDVSLTINIKEAVDGQVAELAKAGVNVSDFNKGNIKARQRMITQYAVAGENSGAVIGTDHAAENLTGFFTKFGDGGADILPLFRLNKRQGAALLAELGADKALYEKVPTADLEEDKPGIADEVALGVTYHEIDDYLEGKEVSAKAQETIETWWRKGQHKRHLPITIFDDFWK.

An ATP-binding site is contributed by 46–53 (GISGGQDS). D52 lines the Mg(2+) pocket. Residue R139 coordinates deamido-NAD(+). T159 serves as a coordination point for ATP. E164 provides a ligand contact to Mg(2+). Residues K172 and D179 each coordinate deamido-NAD(+). ATP is bound by residues K188 and T210. 259–260 (HK) contributes to the deamido-NAD(+) binding site.

Belongs to the NAD synthetase family. In terms of assembly, homodimer.

The catalysed reaction is deamido-NAD(+) + NH4(+) + ATP = AMP + diphosphate + NAD(+) + H(+). It functions in the pathway cofactor biosynthesis; NAD(+) biosynthesis; NAD(+) from deamido-NAD(+) (ammonia route): step 1/1. Catalyzes the ATP-dependent amidation of deamido-NAD to form NAD. Uses ammonia as a nitrogen source. The polypeptide is NH(3)-dependent NAD(+) synthetase (Streptococcus thermophilus (strain ATCC BAA-250 / LMG 18311)).